Here is a 554-residue protein sequence, read N- to C-terminus: Perforin-1 (554 aa).

An N-terminal signal peptide occupies residues 1-20 (MAAYLFLLGLFLLLPRPVPA). 3 cysteine pairs are disulfide-bonded: Cys-22/Cys-75, Cys-30/Cys-72, and Cys-101/Cys-175. One can recognise an MACPF domain in the interval 26 to 374 (TRSECKQNHK…HYVMSRARWR (349 aa)). The chain crosses the membrane as a beta stranded span at residues 128-148 (WRAGLDVNPKPEANVHVSVAG). Asn-204 carries N-linked (GlcNAc...) asparagine glycosylation. Intrachain disulfides connect Cys-241-Cys-407, Cys-376-Cys-392, Cys-380-Cys-394, and Cys-396-Cys-406. The beta stranded transmembrane segment at 256-278 (CLSVEAQVSIGAQASVSSEYKAC) threads the bilayer. The EGF-like domain occupies 375 to 407 (DCNRPCRAGQHKSSRDSCQCVCQDSNVTNQDCC). A C2 domain is found at 395-513 (VCQDSNVTNQ…FHEVNCPLNH (119 aa)). A glycan (N-linked (GlcNAc...) asparagine) is linked at Asn-400. Positions 428, 429, 432, 435, 454, 483, 484, 485, 488, 489, 490, and 491 each coordinate Ca(2+). 2 disulfides stabilise this stretch: Cys-496–Cys-509 and Cys-524–Cys-533. Asn-548 is a glycosylation site (N-linked (GlcNAc...) asparagine).

It belongs to the complement C6/C7/C8/C9 family. In terms of assembly, monomer, as soluble protein. Homooligomer; homooligomerizes to form a pore-forming ring. Ca(2+) is required as a cofactor. Post-translationally, N-glycosylated. In terms of tissue distribution, detected in large granular lymphocytes and lymphokine-activated killer cells.

The protein resides in the cytolytic granule. Its subcellular location is the secreted. It localises to the cell membrane. It is found in the endosome lumen. Functionally, pore-forming protein that plays a key role in granzyme-mediated programmed cell death, and in defense against virus-infected or neoplastic cells. Can insert into the membrane of target cells in its calcium-bound form, oligomerize and form large pores. Promotes cytolysis and apoptosis of target cells by mediating the passage and uptake of cytotoxic granzymes. Facilitates the delivery of cationic cargo protein, while anionic or neural proteins are not delivered efficiently. Perforin pores allow the release of mature caspase-7 (CASP7) into the extracellular milieu. The polypeptide is Perforin-1 (Prf1) (Rattus norvegicus (Rat)).